Consider the following 1157-residue polypeptide: Voltage-dependent calcium channel subunit alpha-2/delta-2 (1157 aa).

The signal sequence occupies residues 1–18 (MAVPARTCGASWPGPVRT). The segment at 1–37 (MAVPARTCGASWPGPVRTARPWPGRGPRPCPDPRGPA) is disordered. The Extracellular portion of the chain corresponds to 19–1119 (ARPWPGRGPR…TEDTSDCGRG (1101 aa)). The span at 24-34 (GRGPRPCPDPR) shows a compositional bias: pro residues. An N-linked (GlcNAc...) asparagine glycan is attached at Asn205. Residues 294 to 472 (DMVIIVDVSG…INTQEYLDVL (179 aa)) form the VWFA domain. Residues Asp300, Ser302, and Ser304 each coordinate a divalent metal cation. An MIDAS-like motif motif is present at residues 300–304 (DVSGS). 6 N-linked (GlcNAc...) asparagine glycosylation sites follow: Asn389, Asn421, Asn510, Asn543, Asn627, and Asn864. Residues Cys446 and Cys1104 are joined by a disulfide bond. In terms of domain architecture, Cache spans 488–577 (WTNVYEDALG…KPQITNFREP (90 aa)). A helical transmembrane segment spans residues 1120–1140 (ASFPPSLGVLVSLQLLLLLGL). Residues 1141–1157 (PPRPQPQIHSFTPSRRL) lie on the Cytoplasmic side of the membrane.

This sequence belongs to the calcium channel subunit alpha-2/delta family. As to quaternary structure, dimer formed of alpha-2-2 and delta-2 chains; disulfide-linked. Voltage-dependent calcium channels are multisubunit complexes, consisting of alpha-1 (CACNA1), alpha-2 (CACNA2D), beta (CACNB) and delta (CACNA2D) subunits in a 1:1:1:1 ratio. Post-translationally, N-glycosylated. May be proteolytically processed into subunits alpha-2-2 and delta-2 that are disulfide-linked. It is however unclear whether such cleavage really takes place in vivo and has a functional role. In heart, it is highly expressed in atrium and at lower level in ventricle.

It is found in the membrane. In terms of biological role, the alpha-2/delta subunit of voltage-dependent calcium channels regulates calcium current density and activation/inactivation kinetics of the calcium channel. Acts as a regulatory subunit for P/Q-type calcium channel (CACNA1A), N-type (CACNA1B), L-type (CACNA1C OR CACNA1D) and possibly T-type (CACNA1G). Overexpression induces apoptosis. The protein is Voltage-dependent calcium channel subunit alpha-2/delta-2 (Cacna2d2) of Rattus norvegicus (Rat).